Here is a 394-residue protein sequence, read N- to C-terminus: Stearoyl-[acyl-carrier-protein] 9-desaturase 1, chloroplastic (394 aa).

Residues 1 to 37 (MVMAMDRIALFSSSSSVYHHGSSHSHGSKSSRVFTIR) constitute a chloroplast transit peptide. Fe cation contacts are provided by Glu135, Glu173, His176, Glu226, Glu259, and His262.

Belongs to the fatty acid desaturase type 2 family. In terms of assembly, homodimer. Requires Fe(2+) as cofactor. Ubiquitously expressed.

It localises to the plastid. It is found in the chloroplast. The enzyme catalyses octadecanoyl-[ACP] + 2 reduced [2Fe-2S]-[ferredoxin] + O2 + 2 H(+) = (9Z)-octadecenoyl-[ACP] + 2 oxidized [2Fe-2S]-[ferredoxin] + 2 H2O. Its pathway is lipid metabolism; fatty acid metabolism. Its function is as follows. Converts stearoyl-ACP to oleoyl-ACP by introduction of a cis double bond between carbons 9 and 10 of the acyl chain. The polypeptide is Stearoyl-[acyl-carrier-protein] 9-desaturase 1, chloroplastic (S-ACP-DES1) (Arabidopsis thaliana (Mouse-ear cress)).